We begin with the raw amino-acid sequence, 435 residues long: Nuclear receptor subfamily 6 group A member 1 (435 aa).

The segment at residues glutamine 11 to glutamate 86 is a DNA-binding region (nuclear receptor). 2 consecutive NR C4-type zinc fingers follow at residues cysteine 14 to cysteine 34 and cysteine 50 to cysteine 69. Residues isoleucine 84–glutamate 158 form a disordered region. Over residues asparagine 121–glutamate 141 the composition is skewed to polar residues. Over residues serine 142–serine 156 the composition is skewed to low complexity. Positions glutamine 204–glutamate 435 constitute an NR LBD domain.

Belongs to the nuclear hormone receptor family. NR6 subfamily. In terms of assembly, homodimer. Transiently expressed in differentiating cells of all embryonic germ layers. Expressed in an anterior to posterior concentration gradient from late gastrula to midneurula stages. Shows a complicated spatio-temporal pattern of expression during neurulation, being predominant in the neural plate and neural crest in midneurula embryos. At late tailbud (stage 30), mainly expressed in the head mesenchyme, gill arches and tail tip. Expression persists in the epidermis, somites and endoderm, and in the central nervous system, expression is restricted to the midbrain, hindbrain and part of the spinal cord. Isoforms Oo and Em are both expressed in the brain and isoform Oo is expressed in the germ cells of both the adult testis and ovary.

The protein localises to the cytoplasm. The protein resides in the nucleus. Functionally, probable orphan nuclear receptor. Binds to a response element containing repeats of the motif 5'-AGGTCA-3'. Required for anterior-posterior patterning during organogenesis. Acts with chordin to play a role in patterning the midbrain-hindbrain. Isoform Em is required for integrin-mediated cell matrix interaction during neurulation and for the morphogenetic movements leading to formation of the neural tube. Also mediates the effect of retinoic acid on primary neurogenesis. This is Nuclear receptor subfamily 6 group A member 1 from Xenopus laevis (African clawed frog).